Reading from the N-terminus, the 622-residue chain is Chaperone protein HscA homolog (622 aa).

It belongs to the heat shock protein 70 family.

Chaperone involved in the maturation of iron-sulfur cluster-containing proteins. Has a low intrinsic ATPase activity which is markedly stimulated by HscB. The protein is Chaperone protein HscA homolog of Burkholderia pseudomallei (strain 668).